A 397-amino-acid polypeptide reads, in one-letter code: CCA-adding enzyme (397 aa).

Residues G26 and R29 each coordinate ATP. Positions 26 and 29 each coordinate CTP. Mg(2+) contacts are provided by D39 and D41. ATP contacts are provided by R110, D153, R156, R159, and R162. CTP contacts are provided by R110, D153, R156, R159, and R162.

This sequence belongs to the tRNA nucleotidyltransferase/poly(A) polymerase family. Bacterial CCA-adding enzyme type 3 subfamily. As to quaternary structure, homodimer. The cofactor is Mg(2+).

It catalyses the reaction a tRNA precursor + 2 CTP + ATP = a tRNA with a 3' CCA end + 3 diphosphate. It carries out the reaction a tRNA with a 3' CCA end + 2 CTP + ATP = a tRNA with a 3' CCACCA end + 3 diphosphate. In terms of biological role, catalyzes the addition and repair of the essential 3'-terminal CCA sequence in tRNAs without using a nucleic acid template. Adds these three nucleotides in the order of C, C, and A to the tRNA nucleotide-73, using CTP and ATP as substrates and producing inorganic pyrophosphate. tRNA 3'-terminal CCA addition is required both for tRNA processing and repair. Also involved in tRNA surveillance by mediating tandem CCA addition to generate a CCACCA at the 3' terminus of unstable tRNAs. While stable tRNAs receive only 3'-terminal CCA, unstable tRNAs are marked with CCACCA and rapidly degraded. This Bacillus thuringiensis subsp. konkukian (strain 97-27) protein is CCA-adding enzyme.